Here is a 335-residue protein sequence, read N- to C-terminus: tRNA N6-adenosine threonylcarbamoyltransferase (335 aa).

A divalent metal cation-binding residues include His109, His113, and Tyr130. Substrate contacts are provided by residues 130 to 134, Asp162, Gly177, Glu181, and Asn266; that span reads YVSGG. Asp294 is a binding site for a divalent metal cation.

The protein belongs to the KAE1 / TsaD family. In terms of assembly, component of the EKC/KEOPS complex composed of at least GON7, TP53RK, TPRKB, OSGEP and LAGE3; the whole complex dimerizes. The cofactor is a divalent metal cation.

It is found in the cytoplasm. It localises to the nucleus. It carries out the reaction L-threonylcarbamoyladenylate + adenosine(37) in tRNA = N(6)-L-threonylcarbamoyladenosine(37) in tRNA + AMP + H(+). Component of the EKC/KEOPS complex that is required for the formation of a threonylcarbamoyl group on adenosine at position 37 (t(6)A37) in tRNAs that read codons beginning with adenine. The complex is probably involved in the transfer of the threonylcarbamoyl moiety of threonylcarbamoyl-AMP (TC-AMP) to the N6 group of A37. OSGEP likely plays a direct catalytic role in this reaction, but requires other protein(s) of the complex to fulfill this activity. The chain is tRNA N6-adenosine threonylcarbamoyltransferase from Bos taurus (Bovine).